We begin with the raw amino-acid sequence, 214 residues long: MKVLVTGFEPFGGEKGNPALEAIKGLPAEIHGAEVRWLEVPTVFHKSAQVLEEEMNRYQPDFVLCIGQAGGRTSLTPERVTINQDDACISDNEDNQPIDRPIRPDGASAYFSSLPIKAMVQAIKKEGLPASVSNTAGTFVCSHLMYQALYLVEKKSPYVKAGFMHIPYMMEQVVNRPTTPAMSLVDIRRGIEAAIGAIIEHGDQELKLVGGETH.

Catalysis depends on residues E78, C141, and H165.

Belongs to the peptidase C15 family. As to quaternary structure, homotetramer.

Its subcellular location is the cytoplasm. The catalysed reaction is Release of an N-terminal pyroglutamyl group from a polypeptide, the second amino acid generally not being Pro.. Its function is as follows. Removes 5-oxoproline from various penultimate amino acid residues except L-proline. The chain is Pyrrolidone-carboxylate peptidase 2 from Streptococcus pneumoniae serotype 4 (strain ATCC BAA-334 / TIGR4).